A 378-amino-acid polypeptide reads, in one-letter code: Chorismate synthase (378 aa).

The tract at residues 42-61 is disordered; it reads IQAELDRRRPGQSPITTPRQ. Position 49 (Arg49) interacts with NADP(+). FMN is bound by residues 126 to 128, Gly287, 302 to 306, and Arg328; these read RAS and KPTAT.

The protein belongs to the chorismate synthase family. In terms of assembly, homotetramer. FMNH2 is required as a cofactor.

The catalysed reaction is 5-O-(1-carboxyvinyl)-3-phosphoshikimate = chorismate + phosphate. It participates in metabolic intermediate biosynthesis; chorismate biosynthesis; chorismate from D-erythrose 4-phosphate and phosphoenolpyruvate: step 7/7. Functionally, catalyzes the anti-1,4-elimination of the C-3 phosphate and the C-6 proR hydrogen from 5-enolpyruvylshikimate-3-phosphate (EPSP) to yield chorismate, which is the branch point compound that serves as the starting substrate for the three terminal pathways of aromatic amino acid biosynthesis. This reaction introduces a second double bond into the aromatic ring system. The sequence is that of Chorismate synthase from Synechococcus sp. (strain JA-2-3B'a(2-13)) (Cyanobacteria bacterium Yellowstone B-Prime).